Reading from the N-terminus, the 375-residue chain is MLFPALALLCPVLVAAHGQLSWVQVGTGPQYPAWTLDDYYTALYRESDPVWGALPEQKYTRKTDRTDLGFADIFSKSIATGGYEVCKRFDDMSPVGTIPAKAGDQVIVQWSSEWPSEGHPGPIGEWMAKCPNDSCTQVDATTLDWFCIAQHNYDAEIKKWPTEILTESLNRQWIFTLPTDLPPGAYLVRHELIALHNSTGPTPDLVSSPQHYPIGIEIMLDSSGTTLPTLTCKFPGCFSYDDYEWHHNIWDDEWQGLLVKWEFPGIAVYPGGYTTGVVNGASAAVKNGMSSSPSSSSGVSSSSSSSVASSDTSDSTTSSGVVAVNVSAASSPSSSISANSAMATGKKTCKRKKRSKIAGQKRHIHRSRVAHLDRH.

The first 16 residues, 1–16 (MLFPALALLCPVLVAA), serve as a signal peptide directing secretion. His119 provides a ligand contact to Cu(2+). Cysteines 130 and 135 form a disulfide. Asn132 is a glycosylation site (N-linked (GlcNAc...) asparagine). His196 is an O2 binding site. Asn197 is a glycosylation site (N-linked (GlcNAc...) asparagine). Tyr212 is a Cu(2+) binding site. Cys232 and Cys237 form a disulfide bridge. Residues 287 to 375 (NGMSSSPSSS…RSRVAHLDRH (89 aa)) are disordered. Over residues 290 to 341 (SSSPSSSSGVSSSSSSSVASSDTSDSTTSSGVVAVNVSAASSPSSSISANSA) the composition is skewed to low complexity. An N-linked (GlcNAc...) asparagine glycan is attached at Asn325. The segment covering 347-369 (KTCKRKKRSKIAGQKRHIHRSRV) has biased composition (basic residues).

It belongs to the polysaccharide monooxygenase AA9 family. Cu(2+) serves as cofactor.

Its subcellular location is the secreted. It is found in the cell wall. It carries out the reaction [(1-&gt;4)-beta-D-glucosyl]n+m + reduced acceptor + O2 = 4-dehydro-beta-D-glucosyl-[(1-&gt;4)-beta-D-glucosyl]n-1 + [(1-&gt;4)-beta-D-glucosyl]m + acceptor + H2O.. Functionally, lytic polysaccharide monooxygenase (LPMO) that depolymerizes polysaccharides via the oxidation of scissile alpha- or beta-(1-4)-glycosidic bonds, yielding C4 oxidation products. Catalysis by LPMOs requires the reduction of the active-site copper from Cu(II) to Cu(I) by a reducing agent and H(2)O(2) or O(2) as a cosubstrate. Required for the expression of stress response phenotypes, including thermotolerance, cell wall integrity, and efficient cell cycle progression. Promotes intrinsic fungal cell wall remodeling events required for efficient adaptation to the host environment. Required for virulence in a murine inhalational model of cryptococcal infection as well as in Galleria mellonella larvae. The sequence is that of AA9 family lytic polysaccharide monooxygenase CEL1 from Cryptococcus neoformans var. grubii serotype A (strain H99 / ATCC 208821 / CBS 10515 / FGSC 9487) (Filobasidiella neoformans var. grubii).